The primary structure comprises 446 residues: Probable arogenate/prephenate dehydrogenase (446 aa).

A Prephenate/arogenate dehydrogenase domain is found at 6-288; it reads LTISIIGGTD…SEAKRGAYYS (283 aa).

This sequence in the N-terminal section; belongs to the prephenate/arogenate dehydrogenase family.

This Methanocaldococcus jannaschii (strain ATCC 43067 / DSM 2661 / JAL-1 / JCM 10045 / NBRC 100440) (Methanococcus jannaschii) protein is Probable arogenate/prephenate dehydrogenase.